Here is a 292-residue protein sequence, read N- to C-terminus: Sulfofructosephosphate aldolase (292 aa).

Lys-193 functions as the Schiff-base intermediate with substrate in the catalytic mechanism.

It belongs to the aldolase LacD family. In terms of assembly, homotetramer.

The catalysed reaction is 6-deoxy-6-sulfo-D-fructose 1-phosphate = (2S)-3-sulfolactaldehyde + dihydroxyacetone phosphate. Functionally, cleaves 6-deoxy-6-sulfo-D-fructose 1-phosphate (SFP) to form dihydroxyacetone phosphate (DHAP) and 3-sulfolactaldehyde (SLA). The polypeptide is Sulfofructosephosphate aldolase (yihT) (Escherichia coli (strain K12)).